Reading from the N-terminus, the 59-residue chain is Large ribosomal subunit protein bL32 (59 aa).

The interval methionine 1 to glutamate 59 is disordered. Residues arginine 49–glutamate 59 are compositionally biased toward basic residues.

This sequence belongs to the bacterial ribosomal protein bL32 family.

The sequence is that of Large ribosomal subunit protein bL32 from Dechloromonas aromatica (strain RCB).